Consider the following 305-residue polypeptide: tRNA dimethylallyltransferase (305 aa).

Position 8–15 (8–15) interacts with ATP; the sequence is GPTAVGKT. 10–15 serves as a coordination point for substrate; it reads TAVGKT. The segment at 33–36 is interaction with substrate tRNA; it reads DSRQ.

This sequence belongs to the IPP transferase family. As to quaternary structure, monomer. It depends on Mg(2+) as a cofactor.

The catalysed reaction is adenosine(37) in tRNA + dimethylallyl diphosphate = N(6)-dimethylallyladenosine(37) in tRNA + diphosphate. In terms of biological role, catalyzes the transfer of a dimethylallyl group onto the adenine at position 37 in tRNAs that read codons beginning with uridine, leading to the formation of N6-(dimethylallyl)adenosine (i(6)A). This Thermotoga maritima (strain ATCC 43589 / DSM 3109 / JCM 10099 / NBRC 100826 / MSB8) protein is tRNA dimethylallyltransferase.